Here is a 293-residue protein sequence, read N- to C-terminus: Formamidopyrimidine-DNA glycosylase (293 aa).

P2 (schiff-base intermediate with DNA) is an active-site residue. The Proton donor role is filled by E3. The active-site Proton donor; for beta-elimination activity is the K58. Residues H104, R123, and K166 each coordinate DNA. An FPG-type zinc finger spans residues 257–293 (AVYDREGERCRTPGCNGTVKRLVQNGRSTFWCSGCQT). The Proton donor; for delta-elimination activity role is filled by R283.

The protein belongs to the FPG family. In terms of assembly, monomer. Zn(2+) serves as cofactor.

The catalysed reaction is Hydrolysis of DNA containing ring-opened 7-methylguanine residues, releasing 2,6-diamino-4-hydroxy-5-(N-methyl)formamidopyrimidine.. It carries out the reaction 2'-deoxyribonucleotide-(2'-deoxyribose 5'-phosphate)-2'-deoxyribonucleotide-DNA = a 3'-end 2'-deoxyribonucleotide-(2,3-dehydro-2,3-deoxyribose 5'-phosphate)-DNA + a 5'-end 5'-phospho-2'-deoxyribonucleoside-DNA + H(+). Involved in base excision repair of DNA damaged by oxidation or by mutagenic agents. Acts as a DNA glycosylase that recognizes and removes damaged bases. Has a preference for oxidized purines, such as 7,8-dihydro-8-oxoguanine (8-oxoG). Has AP (apurinic/apyrimidinic) lyase activity and introduces nicks in the DNA strand. Cleaves the DNA backbone by beta-delta elimination to generate a single-strand break at the site of the removed base with both 3'- and 5'-phosphates. This Rhodopseudomonas palustris (strain HaA2) protein is Formamidopyrimidine-DNA glycosylase.